The sequence spans 227 residues: Small ribosomal subunit protein uS3 (227 aa).

Residues 39–107 enclose the KH type-2 domain; sequence VRQLLQKRLK…PVHITIEEVR (69 aa).

This sequence belongs to the universal ribosomal protein uS3 family. In terms of assembly, part of the 30S ribosomal subunit. Forms a tight complex with proteins S10 and S14.

In terms of biological role, binds the lower part of the 30S subunit head. Binds mRNA in the 70S ribosome, positioning it for translation. The polypeptide is Small ribosomal subunit protein uS3 (rpsC) (Coxiella burnetii (strain RSA 493 / Nine Mile phase I)).